A 602-amino-acid chain; its full sequence is Elongation factor 4 (602 aa).

The region spanning 2-184 (KHIRNFSIIA…AIVAKVPAPR (183 aa)) is the tr-type G domain. GTP is bound by residues 14 to 19 (DHGKST) and 131 to 134 (NKMD).

Belongs to the TRAFAC class translation factor GTPase superfamily. Classic translation factor GTPase family. LepA subfamily.

Its subcellular location is the cell inner membrane. The enzyme catalyses GTP + H2O = GDP + phosphate + H(+). Its function is as follows. Required for accurate and efficient protein synthesis under certain stress conditions. May act as a fidelity factor of the translation reaction, by catalyzing a one-codon backward translocation of tRNAs on improperly translocated ribosomes. Back-translocation proceeds from a post-translocation (POST) complex to a pre-translocation (PRE) complex, thus giving elongation factor G a second chance to translocate the tRNAs correctly. Binds to ribosomes in a GTP-dependent manner. This Verminephrobacter eiseniae (strain EF01-2) protein is Elongation factor 4.